The following is a 618-amino-acid chain: MILQNKTFDLNPNDIAGLELVCQTLRERILEVVSANGGHLSSSLGAVELIVGMHALFDCQKNPFIFDTSHQAYAHKLLTGRFESFSTLRQFKGLSGFTKPSESAYDYFIAGHSSTSVSIGVGVAKAFCLKQALGMPIALLGDGSISAGIFYEALNELGDRKYPMIMILNDNEMSISTPIGALSKALSQLMKGPFYQSFRSKVKKILSTLPESVNYLASRFEESFKLITPGVFFEELGINYIGPINGHDLSAIIETLKLAKELKEPVLIHAQTLKGKGYKIAEGRYEKWHGVGPFDLDTGLSKKSKSTILSPTEAYSNTLLELAKKDEKIVGVTAAMPSGTGLDKLIDAYPLRFFDVAIAEQHALTSSSAMAKEGFKPFVSIYSTFLQRAYDSIVHDACISSLPIKLAIDRAGIVGEDGETHQGLLDVSYLRSIPNMVIFAPRDNETLKNAVRFANEHDSSPCAFRYPRGSFALKEGVFEPSGFVLGRSELLKKEGEILLIGYGNGVGRAHLVQLALKEKNIECALLDLRFLKPLDPNLSAIIAPYQKLYVFSDNYKLGGVASAILEFLSEQNILKPVKSFEIMDEFIMHGNTALVEKSLGLDTESLTDAILKDLGQER.

Residues H70 and 111-113 (GHS) each bind thiamine diphosphate. D142 contacts Mg(2+). Residues 143–144 (GS), N171, Y278, and E360 contribute to the thiamine diphosphate site. N171 is a Mg(2+) binding site.

This sequence belongs to the transketolase family. DXPS subfamily. In terms of assembly, homodimer. Requires Mg(2+) as cofactor. Thiamine diphosphate is required as a cofactor.

It carries out the reaction D-glyceraldehyde 3-phosphate + pyruvate + H(+) = 1-deoxy-D-xylulose 5-phosphate + CO2. The protein operates within metabolic intermediate biosynthesis; 1-deoxy-D-xylulose 5-phosphate biosynthesis; 1-deoxy-D-xylulose 5-phosphate from D-glyceraldehyde 3-phosphate and pyruvate: step 1/1. In terms of biological role, catalyzes the acyloin condensation reaction between C atoms 2 and 3 of pyruvate and glyceraldehyde 3-phosphate to yield 1-deoxy-D-xylulose-5-phosphate (DXP). The sequence is that of 1-deoxy-D-xylulose-5-phosphate synthase from Helicobacter pylori (strain HPAG1).